The primary structure comprises 154 residues: Transcriptional repressor NrdR (154 aa).

Residues 1–22 (MECPNCHKNASRVIDSRPSDEN) form a disordered region. Residues 3 to 34 (CPNCHKNASRVIDSRPSDENRAIRRRRECENC) fold into a zinc finger. Residues 49–139 (LLVIKNDGTR…IYRQFKDVSG (91 aa)) form the ATP-cone domain.

The protein belongs to the NrdR family. Requires Zn(2+) as cofactor.

Functionally, negatively regulates transcription of bacterial ribonucleotide reductase nrd genes and operons by binding to NrdR-boxes. This Lactobacillus gasseri (strain ATCC 33323 / DSM 20243 / BCRC 14619 / CIP 102991 / JCM 1131 / KCTC 3163 / NCIMB 11718 / NCTC 13722 / AM63) protein is Transcriptional repressor NrdR.